The chain runs to 332 residues: DNA-directed RNA polymerase subunit alpha (332 aa).

Positions 1-230 are alpha N-terminal domain (alpha-NTD); sequence MKKITTSAYM…KQMSIFNNVL (230 aa). Residues 246–332 form an alpha C-terminal domain (alpha-CTD) region; it reads EHSKLLESVE…LRKKISELKS (87 aa).

The protein belongs to the RNA polymerase alpha chain family. As to quaternary structure, homodimer. The RNAP catalytic core consists of 2 alpha, 1 beta, 1 beta' and 1 omega subunit. When a sigma factor is associated with the core the holoenzyme is formed, which can initiate transcription.

It catalyses the reaction RNA(n) + a ribonucleoside 5'-triphosphate = RNA(n+1) + diphosphate. DNA-dependent RNA polymerase catalyzes the transcription of DNA into RNA using the four ribonucleoside triphosphates as substrates. This chain is DNA-directed RNA polymerase subunit alpha, found in Campylobacter fetus subsp. fetus (strain 82-40).